A 900-amino-acid polypeptide reads, in one-letter code: Phosphoenolpyruvate carboxylase (900 aa).

Active-site residues include H140 and K568.

This sequence belongs to the PEPCase type 1 family. Mg(2+) is required as a cofactor.

It catalyses the reaction oxaloacetate + phosphate = phosphoenolpyruvate + hydrogencarbonate. Its function is as follows. Forms oxaloacetate, a four-carbon dicarboxylic acid source for the tricarboxylic acid cycle. In Neisseria meningitidis serogroup C / serotype 2a (strain ATCC 700532 / DSM 15464 / FAM18), this protein is Phosphoenolpyruvate carboxylase.